The primary structure comprises 212 residues: Pyridoxine/pyridoxamine 5'-phosphate oxidase (212 aa).

Substrate contacts are provided by residues 8–11 (RREY) and lysine 66. Residues 61–66 (RIVLLK), 76–77 (FT), arginine 82, lysine 83, and glutamine 105 each bind FMN. Substrate is bound by residues tyrosine 123, arginine 127, and serine 131. Residues 140–141 (QS) and tryptophan 185 contribute to the FMN site. 191–193 (RLH) provides a ligand contact to substrate. Arginine 195 lines the FMN pocket.

Belongs to the pyridoxamine 5'-phosphate oxidase family. In terms of assembly, homodimer. FMN is required as a cofactor.

It carries out the reaction pyridoxamine 5'-phosphate + O2 + H2O = pyridoxal 5'-phosphate + H2O2 + NH4(+). It catalyses the reaction pyridoxine 5'-phosphate + O2 = pyridoxal 5'-phosphate + H2O2. It participates in cofactor metabolism; pyridoxal 5'-phosphate salvage; pyridoxal 5'-phosphate from pyridoxamine 5'-phosphate: step 1/1. Its pathway is cofactor metabolism; pyridoxal 5'-phosphate salvage; pyridoxal 5'-phosphate from pyridoxine 5'-phosphate: step 1/1. Catalyzes the oxidation of either pyridoxine 5'-phosphate (PNP) or pyridoxamine 5'-phosphate (PMP) into pyridoxal 5'-phosphate (PLP). The sequence is that of Pyridoxine/pyridoxamine 5'-phosphate oxidase from Shewanella amazonensis (strain ATCC BAA-1098 / SB2B).